The primary structure comprises 171 residues: Large ribosomal subunit protein bL9 (171 aa).

This sequence belongs to the bacterial ribosomal protein bL9 family.

Functionally, binds to the 23S rRNA. The protein is Large ribosomal subunit protein bL9 of Rickettsia typhi (strain ATCC VR-144 / Wilmington).